Here is a 388-residue protein sequence, read N- to C-terminus: Probable peptidoglycan glycosyltransferase FtsW (388 aa).

The next 11 membrane-spanning stretches (helical) occupy residues 16–36, 54–74, 82–102, 109–129, 144–164, 167–187, 189–209, 233–253, 277–297, 310–330, and 342–362; these read LVLIVLALITIGLVMVLSSSV, VFALGVGGLFAALVLMVPSQS, WFLLGLVLLALVLIFGREIGG, LVVMNFQPAEWMKIATILFLA, TAVIRLFLPFGIMAGLLLLQP, GTTVLIAGVLVGMLFIAGAPF, YFVITVLPIGAILAVLLINSP, SQALMAIGSGGITGSGLGASV, WLGVVILLSLYGLLLWRMFAV, ALVVYGVAIMFAGQLLINVGV, and LPFVSYGGSSLMMALLAIGLV.

It belongs to the SEDS family. FtsW subfamily.

The protein localises to the cell inner membrane. It catalyses the reaction [GlcNAc-(1-&gt;4)-Mur2Ac(oyl-L-Ala-gamma-D-Glu-L-Lys-D-Ala-D-Ala)](n)-di-trans,octa-cis-undecaprenyl diphosphate + beta-D-GlcNAc-(1-&gt;4)-Mur2Ac(oyl-L-Ala-gamma-D-Glu-L-Lys-D-Ala-D-Ala)-di-trans,octa-cis-undecaprenyl diphosphate = [GlcNAc-(1-&gt;4)-Mur2Ac(oyl-L-Ala-gamma-D-Glu-L-Lys-D-Ala-D-Ala)](n+1)-di-trans,octa-cis-undecaprenyl diphosphate + di-trans,octa-cis-undecaprenyl diphosphate + H(+). The protein operates within cell wall biogenesis; peptidoglycan biosynthesis. In terms of biological role, peptidoglycan polymerase that is essential for cell division. This is Probable peptidoglycan glycosyltransferase FtsW from Thiomicrospira cyclica (strain DSM 14477 / JCM 11371 / ALM1) (Thioalkalimicrobium cyclicum).